We begin with the raw amino-acid sequence, 502 residues long: Protein DETOXIFICATION 55 (502 aa).

12 helical membrane passes run 30–50 (IWDI…KNMT), 61–81 (LELA…YSVL), 112–132 (IFLL…LAPL), 145–165 (VASL…FLHP), 185–205 (VSVL…SLGV), 207–227 (GVAV…LCYI), 261–283 (VWST…WWWY), 298–318 (VALA…TIPT), 344–364 (ATVA…GTTV), 378–398 (VVLE…LANC), 419–439 (INFY…AFVW), and 447–467 (CYGL…VVYN).

Belongs to the multi antimicrobial extrusion (MATE) (TC 2.A.66.1) family.

It localises to the membrane. This Arabidopsis thaliana (Mouse-ear cress) protein is Protein DETOXIFICATION 55.